A 354-amino-acid polypeptide reads, in one-letter code: S-adenosylmethionine:tRNA ribosyltransferase-isomerase (354 aa).

It belongs to the QueA family. As to quaternary structure, monomer.

It localises to the cytoplasm. It catalyses the reaction 7-aminomethyl-7-carbaguanosine(34) in tRNA + S-adenosyl-L-methionine = epoxyqueuosine(34) in tRNA + adenine + L-methionine + 2 H(+). Its pathway is tRNA modification; tRNA-queuosine biosynthesis. In terms of biological role, transfers and isomerizes the ribose moiety from AdoMet to the 7-aminomethyl group of 7-deazaguanine (preQ1-tRNA) to give epoxyqueuosine (oQ-tRNA). The polypeptide is S-adenosylmethionine:tRNA ribosyltransferase-isomerase (Salmonella typhi).